The chain runs to 335 residues: MTVPQVGINGFGRIGRLVLRAAIEKDTMSVVAINDPFIDLEYMAYMFKFDSTHGRYAGSVETKDGKLIVNGKSITIYGHRDPAEIPWAEAGADYVVESTGVFTLKEKAEKHFTGGAKKVIISAPSKDAPMFVCGVNEDKYTPDLNVISNASCTTNCLAPLVKVIHEKYGIEEGLMTTVHATTATQKTVDGPSQKDWRGGRGAGANIIPSSTGAAKAVGKVLPELNGKLTGMAFRVPTSDVSVVDLTVRLATETSYDDIKATMKAAAEDSMKGILKYTEEAVVSTDFIHEEASCVFDAGAGIMLNSRFCKLVAWYDNEWGYSNRVVDLIAHVAKLQ.

NAD(+) is bound by residues 13–14 (RI), D35, and R80. D-glyceraldehyde 3-phosphate is bound by residues 151–153 (SCT), T182, 211–212 (TG), and R234. Catalysis depends on C152, which acts as the Nucleophile. Position 316 (N316) interacts with NAD(+).

Belongs to the glyceraldehyde-3-phosphate dehydrogenase family. Homotetramer.

Its subcellular location is the cytoplasm. The enzyme catalyses D-glyceraldehyde 3-phosphate + phosphate + NAD(+) = (2R)-3-phospho-glyceroyl phosphate + NADH + H(+). Its pathway is carbohydrate degradation; glycolysis; pyruvate from D-glyceraldehyde 3-phosphate: step 1/5. The sequence is that of Glyceraldehyde-3-phosphate dehydrogenase, cytosolic (GAPC) from Gracilaria gracilis (Red alga).